The following is a 780-amino-acid chain: Endonuclease MutS2 (780 aa).

334 to 341 contacts ATP; sequence GPNAGGKT. Positions 706–780 constitute a Smr domain; it reads IDIRGMRSVD…GGSGKTIVEI (75 aa).

It belongs to the DNA mismatch repair MutS family. MutS2 subfamily. As to quaternary structure, homodimer. Binds to stalled ribosomes, contacting rRNA.

Its function is as follows. Endonuclease that is involved in the suppression of homologous recombination and thus may have a key role in the control of bacterial genetic diversity. In terms of biological role, acts as a ribosome collision sensor, splitting the ribosome into its 2 subunits. Detects stalled/collided 70S ribosomes which it binds and splits by an ATP-hydrolysis driven conformational change. Acts upstream of the ribosome quality control system (RQC), a ribosome-associated complex that mediates the extraction of incompletely synthesized nascent chains from stalled ribosomes and their subsequent degradation. Probably generates substrates for RQC. The protein is Endonuclease MutS2 of Borreliella burgdorferi (strain ATCC 35210 / DSM 4680 / CIP 102532 / B31) (Borrelia burgdorferi).